The chain runs to 358 residues: UDP-N-acetylglucosamine--N-acetylmuramyl-(pentapeptide) pyrophosphoryl-undecaprenol N-acetylglucosamine transferase (358 aa).

UDP-N-acetyl-alpha-D-glucosamine contacts are provided by residues 11 to 13, asparagine 122, arginine 161, serine 189, isoleucine 243, 262 to 267, and glutamine 288; these read TGG and ALTVCE.

It belongs to the glycosyltransferase 28 family. MurG subfamily.

It is found in the cell inner membrane. It catalyses the reaction di-trans,octa-cis-undecaprenyl diphospho-N-acetyl-alpha-D-muramoyl-L-alanyl-D-glutamyl-meso-2,6-diaminopimeloyl-D-alanyl-D-alanine + UDP-N-acetyl-alpha-D-glucosamine = di-trans,octa-cis-undecaprenyl diphospho-[N-acetyl-alpha-D-glucosaminyl-(1-&gt;4)]-N-acetyl-alpha-D-muramoyl-L-alanyl-D-glutamyl-meso-2,6-diaminopimeloyl-D-alanyl-D-alanine + UDP + H(+). It functions in the pathway cell wall biogenesis; peptidoglycan biosynthesis. Cell wall formation. Catalyzes the transfer of a GlcNAc subunit on undecaprenyl-pyrophosphoryl-MurNAc-pentapeptide (lipid intermediate I) to form undecaprenyl-pyrophosphoryl-MurNAc-(pentapeptide)GlcNAc (lipid intermediate II). The polypeptide is UDP-N-acetylglucosamine--N-acetylmuramyl-(pentapeptide) pyrophosphoryl-undecaprenol N-acetylglucosamine transferase (Coxiella burnetii (strain Dugway 5J108-111)).